The primary structure comprises 205 residues: Small ribosomal subunit protein uS4 (205 aa).

The 64-residue stretch at 94-157 (SRLDTVVYRM…QQIPLIQESI (64 aa)) folds into the S4 RNA-binding domain.

Belongs to the universal ribosomal protein uS4 family. Part of the 30S ribosomal subunit. Contacts protein S5. The interaction surface between S4 and S5 is involved in control of translational fidelity.

Its function is as follows. One of the primary rRNA binding proteins, it binds directly to 16S rRNA where it nucleates assembly of the body of the 30S subunit. Functionally, with S5 and S12 plays an important role in translational accuracy. This Rickettsia typhi (strain ATCC VR-144 / Wilmington) protein is Small ribosomal subunit protein uS4.